The chain runs to 492 residues: MTSKIALFDQTLIASLLQPLSLNQPDFKAYKTKVKLKISEQRNETSGEKELKFEISRSDDFEFLFSETLNNEKYQILARDHDLTVDFDAFPKVIIQHLLCKNIVKNLEEDGEVDARKKAGYHSIADPGKPTEINIILDAEKNFCSFELFSKTPISKGKIFSIKLHAVRGDHLISHLLKICSSQAVKLSTFYKSADELASLRQKCGDLEKQVEKLSGVKEEFEEMSEKFKELEDEVELVKEERENIRLLVEDKEDEVADLKQDTESLQKQLEENQEELEIVGNMLREEQGKVDQLQKRNVAHQKEIGKLRAELGTAQRNLEKADQLLKRNSQQQNQQSLDMRKLGELEADLKEKDSMVESLTETIGILRKELENEKLKAAENMDSFEKLSMENENLKEKIAHYRAQRFSPAPSGLPGLQTGLTNRLTPSFKPVLGPHTPYGANLNSRTPFRDNTTLNFQNSTIATPHAFRFNSQLIADETTGSSVTNTPPAQR.

One can recognise a PISA domain in the interval 46 to 98; it reads SGEKELKFEISRSDDFEFLFSETLNNEKYQILARDHDLTVDFDAFPKVIIQHL. The stretch at 192–407 forms a coiled coil; that stretch reads KSADELASLR…KIAHYRAQRF (216 aa).

In terms of assembly, nine homodimers form a cartwheel structure with an internal diameter of 23 nM and radial spokes connecting to the microtubule triplets. Interacts with sas-5.

The protein localises to the cytoplasm. It is found in the cytoskeleton. It localises to the microtubule organizing center. The protein resides in the centrosome. Its subcellular location is the centriole. In terms of biological role, central scaffolding component of the centrioles ensuring their 9-fold symmetry. Required for centrosome biogenesis and duplication. This chain is Spindle assembly abnormal protein 6, found in Caenorhabditis elegans.